The primary structure comprises 86 residues: Small ribosomal subunit protein uS17 (86 aa).

The protein belongs to the universal ribosomal protein uS17 family. As to quaternary structure, part of the 30S ribosomal subunit.

In terms of biological role, one of the primary rRNA binding proteins, it binds specifically to the 5'-end of 16S ribosomal RNA. The chain is Small ribosomal subunit protein uS17 from Shouchella clausii (strain KSM-K16) (Alkalihalobacillus clausii).